Consider the following 61-residue polypeptide: Photosystem II reaction center protein K (61 aa).

Residues 1 to 24 constitute a propeptide that is removed on maturation; sequence MLNIFSLISICLNSALYSSSFFFG. A helical transmembrane segment spans residues 40–60; the sequence is MPVIPVFFFLLAFVWQAAVSF.

Belongs to the PsbK family. In terms of assembly, PSII is composed of 1 copy each of membrane proteins PsbA, PsbB, PsbC, PsbD, PsbE, PsbF, PsbH, PsbI, PsbJ, PsbK, PsbL, PsbM, PsbT, PsbX, PsbY, PsbZ, Psb30/Ycf12, at least 3 peripheral proteins of the oxygen-evolving complex and a large number of cofactors. It forms dimeric complexes.

Its subcellular location is the plastid. It localises to the chloroplast thylakoid membrane. One of the components of the core complex of photosystem II (PSII). PSII is a light-driven water:plastoquinone oxidoreductase that uses light energy to abstract electrons from H(2)O, generating O(2) and a proton gradient subsequently used for ATP formation. It consists of a core antenna complex that captures photons, and an electron transfer chain that converts photonic excitation into a charge separation. The protein is Photosystem II reaction center protein K of Jasminum nudiflorum (Winter jasmine).